Reading from the N-terminus, the 576-residue chain is 4-alpha-glucanotransferase DPE1, chloroplastic/amyloplastic (576 aa).

Residues 1 to 45 constitute a chloroplast transit peptide; it reads MSILLRPSSSPSLCSSLKLFRLSSPDSLIDAAVLRNRTKPSQSFR.

This sequence belongs to the disproportionating enzyme family.

The protein localises to the plastid. Its subcellular location is the chloroplast. It is found in the amyloplast. It catalyses the reaction Transfers a segment of a (1-&gt;4)-alpha-D-glucan to a new position in an acceptor, which may be glucose or a (1-&gt;4)-alpha-D-glucan.. Its function is as follows. Chloroplastic alpha-glucanotransferase involved in maltotriose metabolism. Probably uses maltotriose as substrate to transfer a maltosyl unit from one molecule to another, resulting in glucose and maltopentaose. The latter can then be further metabolized to maltose and maltotriose by beta-amylase. Required for normal starch degradation in leaves. This is 4-alpha-glucanotransferase DPE1, chloroplastic/amyloplastic (DPE1) from Arabidopsis thaliana (Mouse-ear cress).